The sequence spans 213 residues: uncharacterized protein (213 aa).

This is an uncharacterized protein from Aquifex aeolicus (strain VF5).